Consider the following 370-residue polypeptide: Histidinol-phosphate aminotransferase (370 aa).

The residue at position 231 (Lys-231) is an N6-(pyridoxal phosphate)lysine.

This sequence belongs to the class-II pyridoxal-phosphate-dependent aminotransferase family. Histidinol-phosphate aminotransferase subfamily. Homodimer. The cofactor is pyridoxal 5'-phosphate.

The catalysed reaction is L-histidinol phosphate + 2-oxoglutarate = 3-(imidazol-4-yl)-2-oxopropyl phosphate + L-glutamate. It functions in the pathway amino-acid biosynthesis; L-histidine biosynthesis; L-histidine from 5-phospho-alpha-D-ribose 1-diphosphate: step 7/9. This Paracidovorax citrulli (strain AAC00-1) (Acidovorax citrulli) protein is Histidinol-phosphate aminotransferase.